Reading from the N-terminus, the 316-residue chain is Ornithine carbamoyltransferase (316 aa).

Residues 59 to 62 (STRT), Gln86, Arg110, and 137 to 140 (HPCQ) contribute to the carbamoyl phosphate site. Residues Asn168, Asp232, and 236-237 (SM) contribute to the L-ornithine site. Residues 273 to 274 (CL) and Arg301 contribute to the carbamoyl phosphate site.

It belongs to the aspartate/ornithine carbamoyltransferase superfamily. OTCase family.

It localises to the cytoplasm. It carries out the reaction carbamoyl phosphate + L-ornithine = L-citrulline + phosphate + H(+). It functions in the pathway amino-acid biosynthesis; L-arginine biosynthesis; L-arginine from L-ornithine and carbamoyl phosphate: step 1/3. Its function is as follows. Reversibly catalyzes the transfer of the carbamoyl group from carbamoyl phosphate (CP) to the N(epsilon) atom of ornithine (ORN) to produce L-citrulline. The sequence is that of Ornithine carbamoyltransferase from Listeria monocytogenes serotype 4b (strain F2365).